Reading from the N-terminus, the 174-residue chain is Large ribosomal subunit protein uL10 (174 aa).

It belongs to the universal ribosomal protein uL10 family. Part of the ribosomal stalk of the 50S ribosomal subunit. The N-terminus interacts with L11 and the large rRNA to form the base of the stalk. The C-terminus forms an elongated spine to which L12 dimers bind in a sequential fashion forming a multimeric L10(L12)X complex.

In terms of biological role, forms part of the ribosomal stalk, playing a central role in the interaction of the ribosome with GTP-bound translation factors. This Desulfovibrio desulfuricans (strain ATCC 27774 / DSM 6949 / MB) protein is Large ribosomal subunit protein uL10.